We begin with the raw amino-acid sequence, 285 residues long: Hypersensitive-induced reaction 1 protein (285 aa).

G2 is lipidated: N-myristoyl glycine. The stretch at 118–190 (FEQKNEIAKS…EKILQIKRAE (73 aa)) forms a coiled coil.

Homo- and heterodimer. Interacts with LRR1 (via LRR domain). As to expression, constitutively expressed in stems, roots and flowers, but not in leaves and fruits.

Its function is as follows. Positive regulator of hypersensitive response (HR)-like cell death. May be involved in potassium ion channel regulation. The sequence is that of Hypersensitive-induced reaction 1 protein from Capsicum annuum (Capsicum pepper).